Reading from the N-terminus, the 605-residue chain is Sodium-independent sulfate anion transporter (605 aa).

The Extracellular portion of the chain corresponds to 1–50; sequence MPSSLKGLGQAWLSSSSMALSACCSVSAWQKRLPVLAWLPRYSLQWLKMD. Residues 51-71 traverse the membrane as a helical segment; sequence FIAGLSVGLTVIPQALAYAEV. A topological domain (cytoplasmic) is located at residue alanine 72. A helical membrane pass occupies residues 73 to 93; sequence GLPPQYGLYSAFTGCFVYVFL. The Extracellular portion of the chain corresponds to 94–98; sequence GTSRD. Residues 99-119 traverse the membrane as a helical segment; sequence VTLGPTAIMSLLVSFYTFHEP. Over 120 to 122 the chain is Cytoplasmic; sequence AYA. The chain crosses the membrane as a helical span at residues 123 to 143; the sequence is VLLTFLSGCIQLAMGLLHLGF. Residues 144-146 are Extracellular-facing; the sequence is LLD. Residues 147–167 traverse the membrane as a helical segment; it reads FISCPVIKGFTSAAAIIIGFG. Over 168 to 196 the chain is Cytoplasmic; it reads QIKNLLGLHNIPRQFFLQVYHTFLSVGET. Residues 197–217 traverse the membrane as a helical segment; that stretch reads RLGDAILGLVCMVLLLVLKLM. Over 218–249 the chain is Extracellular; sequence RDRIPPVHPEMPLCVRLSCGLVWTTATARNAL. Residues 250-270 form a helical membrane-spanning segment; it reads VVSFAALVAYSFEVTGYQPFI. Residues 271–303 are Cytoplasmic-facing; sequence LTGEIAKGLPPVRVPPFSVTMANGTVSFTRMVQ. A helical transmembrane segment spans residues 304–324; it reads DLGAGLAVVPLIGLLESIAVA. Over 325–340 the chain is Extracellular; sequence KAFASQNDYHVDANQE. Residues 341 to 361 form a helical membrane-spanning segment; it reads LLAIGLTNMLGSFVSSYPITG. At 362 to 373 the chain is on the cytoplasmic side; that stretch reads SFGRTAVNAQSG. A helical membrane pass occupies residues 374–394; it reads VCTPAGGLVTGALVLLSLDYL. At 395–397 the chain is on the extracellular side; that stretch reads TSL. A helical membrane pass occupies residues 398-418; it reads FYYIPKAALAAVIIMAVVPLF. At 419–447 the chain is on the cytoplasmic side; the sequence is DTKIFGMLWRVKRLDLLPLCATFLLCFWE. A helical membrane pass occupies residues 448–468; that stretch reads VQYGILAGTLVSTLFLLHFVA. Over 469–605 the chain is Extracellular; the sequence is RPKTQVSEGP…PEHKVTLLTA (137 aa). The STAS domain maps to 479–582; sequence VLILQLASGL…EKAEQYVRQE (104 aa).

It belongs to the SLC26A/SulP transporter (TC 2.A.53) family.

Its subcellular location is the cell membrane. It localises to the lysosome membrane. The protein resides in the apical cell membrane. It is found in the basolateral cell membrane. The catalysed reaction is hydrogencarbonate(in) + chloride(out) = hydrogencarbonate(out) + chloride(in). It carries out the reaction sulfate(in) + H(+)(in) = sulfate(out) + H(+)(out). The enzyme catalyses oxalate(in) + chloride(out) = oxalate(out) + chloride(in). In terms of biological role, sodium-independent anion exchanger mediating bicarbonate, chloride, sulfate and oxalate transport. Exhibits sodium-independent sulfate anion transporter activity that may cooperate with SLC26A2 to mediate DIDS-sensitive sulfate uptake into high endothelial venules endothelial cells (HEVEC). In the kidney, mediates chloride-bicarbonate exchange, facilitating V-ATPase-mediated acid secretion. May function as a chloride channel, playing an important role in moderating chloride homeostasis and neuronal activity in the cerebellum. The protein is Sodium-independent sulfate anion transporter (Slc26a11) of Cavia porcellus (Guinea pig).